We begin with the raw amino-acid sequence, 627 residues long: uncharacterized protein (627 aa).

Disordered regions lie at residues Glu-57–Asp-82, Pro-96–Gly-121, Gly-160–Tyr-184, Ala-198–Gly-232, Ser-247–Pro-277, Arg-335–Tyr-358, and Val-449–Ser-579. Low complexity predominate over residues Ser-169–Ala-183. Over residues Gln-336–Ala-357 the composition is skewed to low complexity. The span at Phe-450–Ala-464 shows a compositional bias: basic and acidic residues.

This is an uncharacterized protein from Treponema pallidum (strain Nichols).